The primary structure comprises 820 residues: Probable ATP-dependent RNA helicase DDX23 (820 aa).

Over residues 1-42 (MAGELADKKDRDASPSKEERKRSRTPDRERDRDRDRKSSPSK) the composition is skewed to basic and acidic residues. Residues 1–244 (MAGELADKKD…QKIREEKDKS (244 aa)) form a disordered region. Phosphoserine occurs at positions 14 and 16. Residues 43–65 (DRKRHRSRDRRRGGSRSRSRSRS) show a composition bias toward basic residues. The segment covering 66-105 (KSAERERRHKERERDKERDRNKKDRDRDKDGHRRDKDRKR) has biased composition (basic and acidic residues). Phosphoserine occurs at positions 107 and 109. 3 stretches are compositionally biased toward basic and acidic residues: residues 112–137 (RGKDFKSRKDRDSKKDEEDEHGDKKP), 147–226 (LLAK…RETN), and 233–244 (GRQKIREEKDKS). The Q motif signature appears at 391-419 (RSWKDSSLPPHILEVIDKCGYKEPTPIQR). The Helicase ATP-binding domain maps to 422-627 (IPIGLQNRDI…RSYLRRPAVV (206 aa)). 435 to 442 (AETGSGKT) provides a ligand contact to ATP. A DEAD box motif is present at residues 549–552 (DEAD). The Helicase C-terminal domain occupies 651–799 (KRKKLLAILE…SCPPELANHP (149 aa)). Residues Lys-686 and Lys-811 each participate in a glycyl lysine isopeptide (Lys-Gly) (interchain with G-Cter in SUMO2) cross-link.

The protein belongs to the DEAD box helicase family. DDX23/PRP28 subfamily. The phosphorylated form (by SRPK2) is a component of the U4/U6-U5 tri-snRNP complex composed of the U4, U6 and U5 snRNAs and at least PRPF3, PRPF4, PRPF6, PRPF8, PRPF31, SNRNP200, TXNL4A, WDR57, SNRNP40, DDX23, CD2BP2, PPIH, SNU13, EFTUD2, SART1 and USP39. Identified in the spliceosome C complex. Interacts with ERBB4. Interacts with ERCC6. Post-translationally, in vitro phosphorylated by CLK1 and U1 snRNP-associated protein kinase. Phosphorylated by SRPK2 and this phosphorylation is required for its association with the tri-snRNP (U4/U6-U5 tri-small nuclear ribonucleoproteins) and subsequent spliceosomal B complex formation. May be phosphorylated by SRPK2 on Ser residues in the SR domain; the phosphorylation is required for the removal of inappropriate R-loops during transcription.

The protein localises to the nucleus. The protein resides in the chromosome. It carries out the reaction ATP + H2O = ADP + phosphate + H(+). Functionally, involved in pre-mRNA splicing and its phosphorylated form (by SRPK2) is required for spliceosomal B complex formation. Independently of its spliceosome formation function, required for the suppression of incorrect R-loops formed during transcription; R-loops are composed of a DNA:RNA hybrid and the associated non-template single-stranded DNA. The protein is Probable ATP-dependent RNA helicase DDX23 of Pongo abelii (Sumatran orangutan).